A 365-amino-acid polypeptide reads, in one-letter code: Popy Class I histocompatibility antigen, A-1 alpha chain (365 aa).

The signal sequence occupies residues 1–24; the sequence is MAIMAPRTLLLLLSGALALTQTWA. The alpha-1 stretch occupies residues 25-114; the sequence is GSHSMRYFST…LRGYYNQSDG (90 aa). Residues 25-308 are Extracellular-facing; that stretch reads GSHSMRYFST…ELSSQPTIPI (284 aa). Residue Asn110 is glycosylated (N-linked (GlcNAc...) asparagine). Residues 115 to 206 form an alpha-2 region; sequence GSHTIQRMFG…ENGKETLQRT (92 aa). Disulfide bonds link Cys125–Cys188 and Cys227–Cys283. Residues 207-298 are alpha-3; sequence DAPKTHMTHH…GLPEPLTLRW (92 aa). In terms of domain architecture, Ig-like C1-type spans 209–297; it reads PKTHMTHHPV…EGLPEPLTLR (89 aa). The tract at residues 299 to 308 is connecting peptide; the sequence is ELSSQPTIPI. A helical transmembrane segment spans residues 309-332; the sequence is VGIIAGLVLLGAVITGAVVAAVMW. The Cytoplasmic segment spans residues 333-365; it reads RRRNSDRKGGSYSQAASNDSAQGSDVSLTACKV. Positions 340–365 are disordered; the sequence is KGGSYSQAASNDSAQGSDVSLTACKV. Residue Ser343 is modified to Phosphoserine. The span at 343 to 359 shows a compositional bias: polar residues; it reads SYSQAASNDSAQGSDVS. At Tyr344 the chain carries Phosphotyrosine. Residues Ser345, Ser349, Ser352, Ser356, and Ser359 each carry the phosphoserine modification.

The protein belongs to the MHC class I family. Heterodimer of an alpha chain and a beta chain (beta-2-microglobulin).

The protein resides in the membrane. Its function is as follows. Involved in the presentation of foreign antigens to the immune system. The sequence is that of Popy Class I histocompatibility antigen, A-1 alpha chain from Pongo pygmaeus (Bornean orangutan).